The primary structure comprises 804 residues: Exocyst complex component 6 (804 aa).

This sequence belongs to the SEC15 family. In terms of assembly, the exocyst complex is composed of EXOC1, EXOC2, EXOC3, EXOC4, EXOC5, EXOC6, EXOC7 and EXOC8. Interacts with CNTRL. Interacts with RAB11A in a GTP-dependent manner.

Its subcellular location is the cytoplasm. It is found in the perinuclear region. The protein resides in the cell projection. It localises to the growth cone. The protein localises to the midbody. Its subcellular location is the midbody ring. Its function is as follows. Component of the exocyst complex involved in the docking of exocytic vesicles with fusion sites on the plasma membrane. Together with RAB11A, RAB3IP, RAB8A, PARD3, PRKCI, ANXA2, CDC42 and DNMBP promotes transcytosis of PODXL to the apical membrane initiation sites (AMIS), apical surface formation and lumenogenesis. The polypeptide is Exocyst complex component 6 (EXOC6) (Homo sapiens (Human)).